The following is a 679-amino-acid chain: UvrABC system protein B (679 aa).

Positions 25–176 (KGVNTGKEFQ…NLRSYLRSLV (152 aa)) constitute a Helicase ATP-binding domain. 38–45 (GATGTGKT) provides a ligand contact to ATP. The short motif at 91 to 114 (YYDYYQPEAYVPVSDTYIAKTASI) is the Beta-hairpin element. The 155-residue stretch at 429–583 (QIEDLLSEIR…KKYNQVNGIT (155 aa)) folds into the Helicase C-terminal domain. Residues 639 to 674 (PDLIEKLEIKMKDAAKELNFEEAANLRDRIKKLRQK) form the UVR domain.

This sequence belongs to the UvrB family. As to quaternary structure, forms a heterotetramer with UvrA during the search for lesions. Interacts with UvrC in an incision complex.

It is found in the cytoplasm. The UvrABC repair system catalyzes the recognition and processing of DNA lesions. A damage recognition complex composed of 2 UvrA and 2 UvrB subunits scans DNA for abnormalities. Upon binding of the UvrA(2)B(2) complex to a putative damaged site, the DNA wraps around one UvrB monomer. DNA wrap is dependent on ATP binding by UvrB and probably causes local melting of the DNA helix, facilitating insertion of UvrB beta-hairpin between the DNA strands. Then UvrB probes one DNA strand for the presence of a lesion. If a lesion is found the UvrA subunits dissociate and the UvrB-DNA preincision complex is formed. This complex is subsequently bound by UvrC and the second UvrB is released. If no lesion is found, the DNA wraps around the other UvrB subunit that will check the other stand for damage. This is UvrABC system protein B from Prochlorococcus marinus (strain MIT 9301).